Here is a 207-residue protein sequence, read N- to C-terminus: Large ribosomal subunit protein uL4 (207 aa).

The disordered stretch occupies residues 55 to 75 (SAVRGGGRKPWRQKGTGRARQ). Residues 60 to 71 (GGRKPWRQKGTG) show a composition bias toward basic residues.

It belongs to the universal ribosomal protein uL4 family. Part of the 50S ribosomal subunit.

In terms of biological role, one of the primary rRNA binding proteins, this protein initially binds near the 5'-end of the 23S rRNA. It is important during the early stages of 50S assembly. It makes multiple contacts with different domains of the 23S rRNA in the assembled 50S subunit and ribosome. Functionally, forms part of the polypeptide exit tunnel. This is Large ribosomal subunit protein uL4 from Staphylococcus epidermidis (strain ATCC 35984 / DSM 28319 / BCRC 17069 / CCUG 31568 / BM 3577 / RP62A).